Reading from the N-terminus, the 404-residue chain is Formate-dependent phosphoribosylglycinamide formyltransferase (404 aa).

N(1)-(5-phospho-beta-D-ribosyl)glycinamide contacts are provided by residues 25 to 26 and glutamate 85; that span reads EL. ATP contacts are provided by residues arginine 118, lysine 159, 164–169, 199–202, and glutamate 207; these read SSGKGQ and EGFI. The ATP-grasp domain occupies 123-318; it reads RLAAEELGLP…EFELHARAIL (196 aa). Glutamate 277 and glutamate 289 together coordinate Mg(2+). N(1)-(5-phospho-beta-D-ribosyl)glycinamide contacts are provided by residues aspartate 296, lysine 365, and 372–373; that span reads RR.

It belongs to the PurK/PurT family. In terms of assembly, homodimer.

It catalyses the reaction N(1)-(5-phospho-beta-D-ribosyl)glycinamide + formate + ATP = N(2)-formyl-N(1)-(5-phospho-beta-D-ribosyl)glycinamide + ADP + phosphate + H(+). It functions in the pathway purine metabolism; IMP biosynthesis via de novo pathway; N(2)-formyl-N(1)-(5-phospho-D-ribosyl)glycinamide from N(1)-(5-phospho-D-ribosyl)glycinamide (formate route): step 1/1. Functionally, involved in the de novo purine biosynthesis. Catalyzes the transfer of formate to 5-phospho-ribosyl-glycinamide (GAR), producing 5-phospho-ribosyl-N-formylglycinamide (FGAR). Formate is provided by PurU via hydrolysis of 10-formyl-tetrahydrofolate. The sequence is that of Formate-dependent phosphoribosylglycinamide formyltransferase from Burkholderia pseudomallei (strain 1106a).